The sequence spans 448 residues: 4-hydroxybenzoate transporter PcaK (448 aa).

At methionine 1–isoleucine 30 the chain is on the cytoplasmic side. Residues valine 31 to isoleucine 51 traverse the membrane as a helical segment. Over alanine 52 to glycine 67 the chain is Periplasmic. Residues proline 68 to alanine 88 traverse the membrane as a helical segment. Residues aspartate 89–lysine 94 lie on the Cytoplasmic side of the membrane. The helical transmembrane segment at leucine 95–threonine 115 threads the bilayer. At asparagine 116 to glutamine 119 the chain is on the periplasmic side. A helical membrane pass occupies residues leucine 120–threonine 140. At leucine 141–serine 152 the chain is on the cytoplasmic side. Residues leucine 153 to serine 173 form a helical membrane-spanning segment. The Periplasmic segment spans residues alanine 174–serine 184. The helical transmembrane segment at leucine 185–proline 205 threads the bilayer. Residues glutamate 206 to tyrosine 261 are Cytoplasmic-facing. A helical membrane pass occupies residues serine 262–leucine 282. At threonine 283–alanine 301 the chain is on the periplasmic side. The chain crosses the membrane as a helical span at residues phenylalanine 302 to methionine 322. Over aspartate 323 to lysine 329 the chain is Cytoplasmic. The helical transmembrane segment at valine 330–glycine 350 threads the bilayer. Position 351 (glutamine 351) is a topological domain, periplasmic. A helical transmembrane segment spans residues valine 352–alanine 372. The Cytoplasmic segment spans residues methionine 373–arginine 398. A helical transmembrane segment spans residues phenylalanine 399–glutamate 419. The Periplasmic segment spans residues glutamine 420 to valine 421. A helical membrane pass occupies residues leucine 422 to valine 442. The Cytoplasmic segment spans residues serine 443–glycine 448.

This sequence belongs to the major facilitator superfamily. Aromatic acid:H(+) symporter (AAHS) (TC 2.A.1.15) family.

It is found in the cell inner membrane. Functionally, transports 4-hydroxybenzoate (4-HBA) and protocatechuate across the membrane. Driven by the proton motive force. Also functions as a chemoreceptor, which is required for chemotaxis to aromatic acids. The protein is 4-hydroxybenzoate transporter PcaK (pcaK) of Pseudomonas aeruginosa (strain ATCC 15692 / DSM 22644 / CIP 104116 / JCM 14847 / LMG 12228 / 1C / PRS 101 / PAO1).